The chain runs to 437 residues: Peptidyl-prolyl cis-trans isomerase CYP38, chloroplastic (437 aa).

The transit peptide at 1–36 (MAAAFASLPTFSVVNSSRFPRRRIGFSCSKKPLEVR) directs the protein to the chloroplast. The transit peptide at 37 to 92 (CSSGNTRYTKQRGAFTSLKECAISLALSVGLMVSVPSIALPPNAHAVANPVIPDVS) directs the protein to the thylakoid. A PPIase cyclophilin-type domain is found at 245-437 (VKIKDNPNIE…LANPSYKIAG (193 aa)).

In terms of tissue distribution, ubiquitous. Lower levels of expression in roots.

It is found in the plastid. It localises to the chloroplast thylakoid lumen. It carries out the reaction [protein]-peptidylproline (omega=180) = [protein]-peptidylproline (omega=0). Required for the assembly and stabilization of PSII, but has no PPIases activity. The chain is Peptidyl-prolyl cis-trans isomerase CYP38, chloroplastic (CYP38) from Arabidopsis thaliana (Mouse-ear cress).